The primary structure comprises 152 residues: Transmembrane protein 35B (152 aa).

The first 21 residues, 1-21, serve as a signal peptide directing secretion; the sequence is MLVSLGALRVLLGIFFTLTGA. Transmembrane regions (helical) follow at residues 62-82, 85-105, and 111-131; these read AAVGWLELLAGLLLVVGPPVL, ISNVLLILLMMGAVFTLVVLE, and YIPAVVCLGLLLLLDSCQFLV.

Belongs to the DoxX family.

It localises to the membrane. This is Transmembrane protein 35B from Rattus norvegicus (Rat).